The following is a 178-amino-acid chain: Inner membrane-spanning protein YciB (178 aa).

The next 5 membrane-spanning stretches (helical) occupy residues 22–42 (IFVA…VSWL), 50–70 (MALF…ALHN), 76–96 (WKVT…HWFM), 121–141 (IAWA…AFWL), and 149–169 (FKVF…GIYI).

Belongs to the YciB family.

Its subcellular location is the cell inner membrane. Plays a role in cell envelope biogenesis, maintenance of cell envelope integrity and membrane homeostasis. This is Inner membrane-spanning protein YciB from Erwinia tasmaniensis (strain DSM 17950 / CFBP 7177 / CIP 109463 / NCPPB 4357 / Et1/99).